Reading from the N-terminus, the 462-residue chain is L-seryl-tRNA(Sec) selenium transferase (462 aa).

Lysine 292 is subject to N6-(pyridoxal phosphate)lysine.

This sequence belongs to the SelA family. It depends on pyridoxal 5'-phosphate as a cofactor.

Its subcellular location is the cytoplasm. The enzyme catalyses L-seryl-tRNA(Sec) + selenophosphate + H(+) = L-selenocysteinyl-tRNA(Sec) + phosphate. The protein operates within aminoacyl-tRNA biosynthesis; selenocysteinyl-tRNA(Sec) biosynthesis; selenocysteinyl-tRNA(Sec) from L-seryl-tRNA(Sec) (bacterial route): step 1/1. Its function is as follows. Converts seryl-tRNA(Sec) to selenocysteinyl-tRNA(Sec) required for selenoprotein biosynthesis. In Geotalea daltonii (strain DSM 22248 / JCM 15807 / FRC-32) (Geobacter daltonii), this protein is L-seryl-tRNA(Sec) selenium transferase.